The following is a 53-amino-acid chain: Light-harvesting protein B-808/866 beta chain (53 aa).

The residue at position 1 (M1) is an N-formylmethionine. At 1–25 (MRDDDDLVPPKWRPLFNNQDWLLHD) the chain is on the cytoplasmic side. The a bacteriochlorophyll site is built by H24 and H42. The helical transmembrane segment at 26 to 48 (IVVKSFYGFGVIAAIAHLLVYLW) threads the bilayer. At 49–53 (KPWLP) the chain is on the periplasmic side.

The protein belongs to the antenna complex beta subunit family. As to quaternary structure, the core complex is formed by different alpha and beta chains, binding bacteriochlorophyll molecules, and arranged most probably in tetrameric structures disposed around the reaction center. The non-pigmented gamma chains may constitute additional components.

It is found in the cell membrane. Antenna complexes are light-harvesting systems, which transfer the excitation energy to the reaction centers. In Chloroflexus aurantiacus (strain ATCC 29366 / DSM 635 / J-10-fl), this protein is Light-harvesting protein B-808/866 beta chain (puf2B).